We begin with the raw amino-acid sequence, 288 residues long: 5,10-methylenetetrahydrofolate reductase (288 aa).

Ala-51, His-73, Gly-106, Asp-107, Ala-118, Tyr-140, His-144, and Lys-159 together coordinate FAD. Residue Asp-107 participates in (6S)-5-methyl-5,6,7,8-tetrahydrofolate binding. Gln-175 serves as a coordination point for (6S)-5-methyl-5,6,7,8-tetrahydrofolate. Gln-175 contributes to the NADH binding site.

The protein belongs to the methylenetetrahydrofolate reductase family. It depends on FAD as a cofactor.

It carries out the reaction (6S)-5-methyl-5,6,7,8-tetrahydrofolate + NAD(+) = (6R)-5,10-methylene-5,6,7,8-tetrahydrofolate + NADH + H(+). It participates in one-carbon metabolism; tetrahydrofolate interconversion. It functions in the pathway amino-acid biosynthesis; L-methionine biosynthesis via de novo pathway. Functionally, catalyzes the NADH-dependent reduction of 5,10-methylenetetrahydrofolate to 5-methyltetrahydrofolate. Is required to provide the methyl group necessary for methionine synthetase to convert homocysteine to methionine; the methyl group is given by 5-methyltetrahydrofolate. Is required for Sphingobium SYK-6 to grow on vanillate or syringate as the sole source of carbon. The protein is 5,10-methylenetetrahydrofolate reductase of Sphingobium sp. (strain NBRC 103272 / SYK-6).